The following is a 358-amino-acid chain: tRNA-specific 2-thiouridylase MnmA (358 aa).

ATP contacts are provided by residues 6-13 and Met32; that span reads ALSGGVDS. Catalysis depends on Cys103, which acts as the Nucleophile. Cys103 and Cys201 are disulfide-bonded. Gly127 provides a ligand contact to ATP. The tract at residues 151–153 is interaction with tRNA; that stretch reads KDQ. The active-site Cysteine persulfide intermediate is the Cys201.

It belongs to the MnmA/TRMU family.

It is found in the cytoplasm. It catalyses the reaction S-sulfanyl-L-cysteinyl-[protein] + uridine(34) in tRNA + AH2 + ATP = 2-thiouridine(34) in tRNA + L-cysteinyl-[protein] + A + AMP + diphosphate + H(+). In terms of biological role, catalyzes the 2-thiolation of uridine at the wobble position (U34) of tRNA, leading to the formation of s(2)U34. The protein is tRNA-specific 2-thiouridylase MnmA of Thermotoga maritima (strain ATCC 43589 / DSM 3109 / JCM 10099 / NBRC 100826 / MSB8).